Here is a 170-residue protein sequence, read N- to C-terminus: Plastocyanin, chloroplastic (170 aa).

The transit peptide at 1–71 (MATVTSAAVA…SAMLASNAMA (71 aa)) directs the protein to the chloroplast. A Plastocyanin-like domain is found at 72 to 170 (LEVLLGGDDG…AGMVGKVTVN (99 aa)). Cu cation-binding residues include His-108, Cys-155, His-158, and Met-163.

It belongs to the plastocyanin family. Requires Cu(2+) as cofactor.

It is found in the plastid. The protein localises to the chloroplast thylakoid membrane. In terms of biological role, participates in electron transfer between P700 and the cytochrome b6-f complex in photosystem I. The sequence is that of Plastocyanin, chloroplastic (PETE) from Solanum lycopersicum (Tomato).